A 292-amino-acid chain; its full sequence is Phosphoribulokinase, plasmid (292 aa).

12–20 contacts ATP; the sequence is GSSGAGTTS.

It belongs to the phosphoribulokinase family. As to quaternary structure, homooctamer.

The catalysed reaction is D-ribulose 5-phosphate + ATP = D-ribulose 1,5-bisphosphate + ADP + H(+). It functions in the pathway carbohydrate biosynthesis; Calvin cycle. The sequence is that of Phosphoribulokinase, plasmid (cfxP) from Cupriavidus necator (strain ATCC 17699 / DSM 428 / KCTC 22496 / NCIMB 10442 / H16 / Stanier 337) (Ralstonia eutropha).